The chain runs to 401 residues: Restriction of telomere capping protein 4 (401 aa).

Position 23 is a phosphoserine (serine 23). The segment covering 35–48 has biased composition (basic and acidic residues); the sequence is KHDIHDRESDDLSG. A disordered region spans residues 35–59; the sequence is KHDIHDRESDDLSGHDAFSPSKKRG.

It belongs to the RTC4 family.

It is found in the cytoplasm. It localises to the nucleus. Functionally, may be involved in a process influencing telomere capping. The polypeptide is Restriction of telomere capping protein 4 (RTC4) (Saccharomyces cerevisiae (strain ATCC 204508 / S288c) (Baker's yeast)).